A 188-amino-acid polypeptide reads, in one-letter code: MDFNKIGDENVVFQIFKLEMLIMSEFPSFIEEKDKLLCLNVLANLLGGIFENEDKIIPNYKEAVIAALFERLLLSSNQKSTSKSNQMIKLLNNSLAHNNGLPSQRCNHDSKLVYMSLVQNNGLPGQRSNYVCCPLCMEQHCIELLTYQLFAKWRNFPRIDFSPVLQGNRGPRFFYTCFLCNSTFLASA.

The protein localises to the cytoplasm. The protein resides in the nucleus. In terms of biological role, has a role in meiosis. This chain is Meiotically up-regulated gene 94 protein (mug94), found in Schizosaccharomyces pombe (strain 972 / ATCC 24843) (Fission yeast).